A 374-amino-acid chain; its full sequence is Chaperone protein DnaJ (374 aa).

Residues 5–70 (DYYEILEIER…GKRQLYDRYG (66 aa)) enclose the J domain. The CR-type zinc-finger motif lies at 136–213 (GCKKEIKIRY…CNGKGHENKE (78 aa)). Zn(2+)-binding residues include Cys149, Cys152, Cys165, Cys168, Cys187, Cys190, Cys201, and Cys204. CXXCXGXG motif repeat units follow at residues 149-156 (CPDCKGTG), 165-172 (CPDCGGRG), 187-194 (CPKCGGSG), and 201-208 (CPKCNGKG).

Belongs to the DnaJ family. Homodimer. Zn(2+) serves as cofactor.

It localises to the cytoplasm. Its function is as follows. Participates actively in the response to hyperosmotic and heat shock by preventing the aggregation of stress-denatured proteins and by disaggregating proteins, also in an autonomous, DnaK-independent fashion. Unfolded proteins bind initially to DnaJ; upon interaction with the DnaJ-bound protein, DnaK hydrolyzes its bound ATP, resulting in the formation of a stable complex. GrpE releases ADP from DnaK; ATP binding to DnaK triggers the release of the substrate protein, thus completing the reaction cycle. Several rounds of ATP-dependent interactions between DnaJ, DnaK and GrpE are required for fully efficient folding. Also involved, together with DnaK and GrpE, in the DNA replication of plasmids through activation of initiation proteins. The sequence is that of Chaperone protein DnaJ from Wolinella succinogenes (strain ATCC 29543 / DSM 1740 / CCUG 13145 / JCM 31913 / LMG 7466 / NCTC 11488 / FDC 602W) (Vibrio succinogenes).